Here is a 213-residue protein sequence, read N- to C-terminus: Holliday junction branch migration complex subunit RuvA (213 aa).

Positions 1–69 (MISYLKGIVA…EEIPLLYGFS (69 aa)) are domain I. A domain II region spans residues 70 to 148 (SPAERDLFRH…EWRKSAGFFV (79 aa)). The interval 149–158 (ATEGPAPGIL) is flexible linker. Positions 158 to 213 (LEEVQMTLFALGYTAHEVSHALHVVSEDIGLPKDAYVEDWIKQAIAHLSSSEQVSH) are domain III.

It belongs to the RuvA family. As to quaternary structure, homotetramer. Forms an RuvA(8)-RuvB(12)-Holliday junction (HJ) complex. HJ DNA is sandwiched between 2 RuvA tetramers; dsDNA enters through RuvA and exits via RuvB. An RuvB hexamer assembles on each DNA strand where it exits the tetramer. Each RuvB hexamer is contacted by two RuvA subunits (via domain III) on 2 adjacent RuvB subunits; this complex drives branch migration. In the full resolvosome a probable DNA-RuvA(4)-RuvB(12)-RuvC(2) complex forms which resolves the HJ.

It localises to the cytoplasm. Functionally, the RuvA-RuvB-RuvC complex processes Holliday junction (HJ) DNA during genetic recombination and DNA repair, while the RuvA-RuvB complex plays an important role in the rescue of blocked DNA replication forks via replication fork reversal (RFR). RuvA specifically binds to HJ cruciform DNA, conferring on it an open structure. The RuvB hexamer acts as an ATP-dependent pump, pulling dsDNA into and through the RuvAB complex. HJ branch migration allows RuvC to scan DNA until it finds its consensus sequence, where it cleaves and resolves the cruciform DNA. The chain is Holliday junction branch migration complex subunit RuvA from Nostoc sp. (strain PCC 7120 / SAG 25.82 / UTEX 2576).